Consider the following 119-residue polypeptide: Putative ankyrin repeat domain-containing protein 26-like 1 (119 aa).

Residues 15–112 (EKEEDLLHKN…EKQSRQRLTK (98 aa)) adopt a coiled-coil conformation.

The chain is Putative ankyrin repeat domain-containing protein 26-like 1 (ANKRD36BP1) from Homo sapiens (Human).